Consider the following 321-residue polypeptide: tRNA(Ile)-lysidine synthase (321 aa).

30-35 (SGGSDS) is a binding site for ATP.

This sequence belongs to the tRNA(Ile)-lysidine synthase family.

The protein localises to the cytoplasm. It catalyses the reaction cytidine(34) in tRNA(Ile2) + L-lysine + ATP = lysidine(34) in tRNA(Ile2) + AMP + diphosphate + H(+). Ligates lysine onto the cytidine present at position 34 of the AUA codon-specific tRNA(Ile) that contains the anticodon CAU, in an ATP-dependent manner. Cytidine is converted to lysidine, thus changing the amino acid specificity of the tRNA from methionine to isoleucine. This is tRNA(Ile)-lysidine synthase from Chlamydia muridarum (strain MoPn / Nigg).